We begin with the raw amino-acid sequence, 308 residues long: CAAX prenyl protease 2 (308 aa).

Ala-2 bears the N-acetylalanine mark. 3 helical membrane-spanning segments follow: residues 25 to 45 (ALSSPGPGLCCWVSVFSCFSL), 75 to 95 (VLVVSSLSPLCVLLWRELTGI), and 112 to 132 (IFPAALLPLLLTMILFLGPLM). Glu-175 (proton donor/acceptor) is an active-site residue. A helical membrane pass occupies residues 186 to 206 (MLAPCTGLGPAVFTCPLFFGV). His-208 acts as the Proton donor/acceptor in catalysis. The next 2 membrane-spanning stretches (helical) occupy residues 233–253 (LIGPVLCHSFCNYMGFPAVCA) and 262–282 (PLLAGYALGVGLFLLLLQPLT).

The protein belongs to the peptidase U48 family. Post-translationally, ubiquitinated. Undergoes 'Lys-48'- and 'Lys-63'-linked ubiquitination. 'Lys-48' ubiquitination induces its degradation. Deubiquitinated by USP17L2/USP17 that cleaves 'Lys-63'-linked ubiquitin chains.

Its subcellular location is the endoplasmic reticulum membrane. It catalyses the reaction Hydrolyzes the peptide bond -P2-(S-farnesyl or geranylgeranyl)C-P1'-P2'-P3'-COOH where P1' and P2' are amino acids with aliphatic sidechains and P3' is any C-terminal residue.. Deubiquitination by USP17L2/USP17 negatively regulates the proteolytic activity toward Ras GTPases. Its function is as follows. Protease involved in the processing of a variety of prenylated proteins containing the C-terminal CAAX motif, where C is a cysteine modified with an isoprenoid lipid, A is an aliphatic amino acid and X is any C-terminal amino acid. Proteolytically removes the C-terminal three residues of farnesylated and geranylated proteins, leaving the prenylated cysteine as the new C-terminus. Is able to process K-Ras, N-Ras, H-Ras, RAP1B and G-gamma-1. This chain is CAAX prenyl protease 2 (Rce1), found in Rattus norvegicus (Rat).